We begin with the raw amino-acid sequence, 83 residues long: Cytochrome b559 subunit alpha (83 aa).

A helical transmembrane segment spans residues 21–35 (VIHSITIPSLFIAGW). Histidine 23 serves as a coordination point for heme.

The protein belongs to the PsbE/PsbF family. In terms of assembly, heterodimer of an alpha subunit and a beta subunit. PSII is composed of 1 copy each of membrane proteins PsbA, PsbB, PsbC, PsbD, PsbE, PsbF, PsbH, PsbI, PsbJ, PsbK, PsbL, PsbM, PsbT, PsbX, PsbY, PsbZ, Psb30/Ycf12, at least 3 peripheral proteins of the oxygen-evolving complex and a large number of cofactors. It forms dimeric complexes. Heme b serves as cofactor.

Its subcellular location is the plastid. The protein resides in the chloroplast thylakoid membrane. In terms of biological role, this b-type cytochrome is tightly associated with the reaction center of photosystem II (PSII). PSII is a light-driven water:plastoquinone oxidoreductase that uses light energy to abstract electrons from H(2)O, generating O(2) and a proton gradient subsequently used for ATP formation. It consists of a core antenna complex that captures photons, and an electron transfer chain that converts photonic excitation into a charge separation. The polypeptide is Cytochrome b559 subunit alpha (Staurastrum punctulatum (Green alga)).